The following is a 43-amino-acid chain: MLMSTLPGGVILVFILVGLACIAIISTIIYRKWQARQRGLQRF.

Positions methionine 1–threonine 5 are excised as a propeptide. Residues glycine 9–isoleucine 29 traverse the membrane as a helical segment. At tyrosine 30 to phenylalanine 43 the chain is on the cytoplasmic side.

In terms of assembly, monomer and homodimer. Associated with the 100 kDa subunit of the plasma membrane H(+)-ATPase.

The protein resides in the cell membrane. The polypeptide is Plasma membrane ATPase proteolipid 2 (PMP2) (Saccharomyces cerevisiae (strain ATCC 204508 / S288c) (Baker's yeast)).